The sequence spans 450 residues: ATP-dependent protease ATPase subunit HslU (450 aa).

Residues valine 29, 71–76 (GVGKTE), aspartate 261, glutamate 328, and arginine 400 contribute to the ATP site.

It belongs to the ClpX chaperone family. HslU subfamily. A double ring-shaped homohexamer of HslV is capped on each side by a ring-shaped HslU homohexamer. The assembly of the HslU/HslV complex is dependent on binding of ATP.

Its subcellular location is the cytoplasm. Its function is as follows. ATPase subunit of a proteasome-like degradation complex; this subunit has chaperone activity. The binding of ATP and its subsequent hydrolysis by HslU are essential for unfolding of protein substrates subsequently hydrolyzed by HslV. HslU recognizes the N-terminal part of its protein substrates and unfolds these before they are guided to HslV for hydrolysis. In Rickettsia africae (strain ESF-5), this protein is ATP-dependent protease ATPase subunit HslU.